The primary structure comprises 491 residues: Alpha-2-antiplasmin (491 aa).

Positions 1–27 (MALLRGLLVLSLSCLQGPCFTFSPVSA) are cleaved as a signal peptide. Residues 28-39 (VDLPGQQPVSEQ) constitute a propeptide that is removed on maturation. Residues Cys70 and Cys143 are joined by a disulfide bond. Asn126, Asn295, Asn309, and Asn316 each carry an N-linked (GlcNAc...) asparagine glycan. The tract at residues 439–491 (SALPQLQEQRDSPDNRLIGQNDKADFHGGKTFGPDLKLAPRMEEDYPQFSSPK) is disordered. The residue at position 484 (Tyr484) is a Sulfotyrosine.

Belongs to the serpin family. As to quaternary structure, forms protease inhibiting heterodimer with TMPRSS7. Post-translationally, proteolytically cleaved at Pro-35 by both the prolyl endopeptidase FAP form and antiplasmin-cleaving enzyme FAP soluble form to generate mature alpha-2-antiplasmin. As to expression, expressed by the liver and secreted in plasma.

It is found in the secreted. Serine protease inhibitor. The major targets of this inhibitor are plasmin and trypsin, but it also inactivates matriptase-3/TMPRSS7 and chymotrypsin. This Mus musculus (Mouse) protein is Alpha-2-antiplasmin (Serpinf2).